The chain runs to 386 residues: Sphingosine 1-phosphate receptor 4 (386 aa).

At 1 to 56 the chain is on the extracellular side; the sequence is MNISTWSTLVTPESCHRLAASGHSLLIVLHYNHSGRLASRGGSEDGGGLGMLRGPS. 2 N-linked (GlcNAc...) asparagine glycosylation sites follow: Asn-2 and Asn-32. Residues 57-77 form a helical membrane-spanning segment; it reads VAAGCLVVLENAMVLAAIAIY. The Cytoplasmic portion of the chain corresponds to 78–87; the sequence is MRSRRWVYYC. The chain crosses the membrane as a helical span at residues 88 to 108; it reads LLNITLSDLLTGLAYVVNVLL. Residues 109-120 lie on the Extracellular side of the membrane; sequence SGTRTFQLSPVH. The helical transmembrane segment at 121 to 141 threads the bilayer; it reads WFLREGLLFMALAASTFSLLF. Over 142-163 the chain is Cytoplasmic; sequence TAGERFATMVRVAESGATKTSR. The chain crosses the membrane as a helical span at residues 164-184; that stretch reads VYGCIGLCWLLAAILGLLPLL. The Extracellular segment spans residues 185-208; the sequence is GWNCVCAFPRCSSLLPLYSKGYVL. Residues 209–229 form a helical membrane-spanning segment; sequence FCVVVFALILVAILSLYGAIF. Residues 230 to 254 are Cytoplasmic-facing; it reads RVVRANGQKSPRPPARRKSRRLLNT. A helical transmembrane segment spans residues 255-275; it reads VLMILVAFVVCWGPLFGLLLA. Over 276 to 290 the chain is Extracellular; that stretch reads DIFGSNVWAQEYLRG. The chain crosses the membrane as a helical span at residues 291 to 311; it reads MDWILALAVFNSAINPLIYSF. Residues 312 to 386 are Cytoplasmic-facing; sequence RSREVQRAVL…LSSISSVRST (75 aa). A lipid anchor (S-palmitoyl cysteine) is attached at Cys-325.

Belongs to the G-protein coupled receptor 1 family. In terms of tissue distribution, specifically expressed in fetal and adult lymphoid and hematopoietic tissue. Expressed in lung, spleen, thymus and lymph node but absent in other non-lymphatic tissue. Coexpressed with GNA15 at the same relative levels in all tissues examined, with the highest levels in adult spleen and lung.

The protein localises to the cell membrane. Functionally, receptor for the lysosphingolipid sphingosine 1-phosphate (S1P). S1P is a bioactive lysophospholipid that elicits diverse physiological effect on most types of cells and tissues. May be involved in cell migration processes that are specific for lymphocytes. This is Sphingosine 1-phosphate receptor 4 (S1pr4) from Mus musculus (Mouse).